Reading from the N-terminus, the 426-residue chain is 3-phosphoshikimate 1-carboxyvinyltransferase (426 aa).

The 3-phosphoshikimate site is built by Lys22, Ser23, and Arg27. Lys22 is a binding site for phosphoenolpyruvate. The phosphoenolpyruvate site is built by Gly96 and Arg124. Residues Ser170, Ser171, Gln172, Ser198, Asp314, Asn337, and Lys341 each coordinate 3-phosphoshikimate. Gln172 is a phosphoenolpyruvate binding site. Asp314 functions as the Proton acceptor in the catalytic mechanism. Arg345, Arg387, and Lys412 together coordinate phosphoenolpyruvate.

This sequence belongs to the EPSP synthase family. Monomer.

The protein resides in the cytoplasm. It carries out the reaction 3-phosphoshikimate + phosphoenolpyruvate = 5-O-(1-carboxyvinyl)-3-phosphoshikimate + phosphate. It functions in the pathway metabolic intermediate biosynthesis; chorismate biosynthesis; chorismate from D-erythrose 4-phosphate and phosphoenolpyruvate: step 6/7. Its function is as follows. Catalyzes the transfer of the enolpyruvyl moiety of phosphoenolpyruvate (PEP) to the 5-hydroxyl of shikimate-3-phosphate (S3P) to produce enolpyruvyl shikimate-3-phosphate and inorganic phosphate. The sequence is that of 3-phosphoshikimate 1-carboxyvinyltransferase from Shewanella sp. (strain W3-18-1).